Consider the following 79-residue polypeptide: Endothelin-2 (79 aa).

Residues 1-23 (PEQTAPYGLGNPPRRRRRSLPRR) form a disordered region. The tract at residues 24-39 (CQCSSARDPSCATFCL) is endothelin-like. The interval 51–79 (SRKSPADVFQTGKTGATRGELLQRLRDIS) is disordered.

This sequence belongs to the endothelin/sarafotoxin family.

The protein resides in the secreted. Functionally, endothelins are endothelium-derived vasoconstrictor peptides. This is Endothelin-2 (EDN2) from Macaca fascicularis (Crab-eating macaque).